Here is a 213-residue protein sequence, read N- to C-terminus: Putative 3-methyladenine DNA glycosylase (213 aa).

It belongs to the DNA glycosylase MPG family.

This Paraburkholderia phytofirmans (strain DSM 17436 / LMG 22146 / PsJN) (Burkholderia phytofirmans) protein is Putative 3-methyladenine DNA glycosylase.